The chain runs to 114 residues: Mobility group protein 1A (114 aa).

The HMG box DNA-binding region spans 5–71; that stretch reads PKRPLSAYML…EYEKAMKEFE (67 aa). The tract at residues 69 to 114 is disordered; sequence EFERNGGDKSSGASTKKRGKAAEKKKPAKKSKKKDSEDDEEEDESD. A compositionally biased stretch (acidic residues) spans 105–114; the sequence is EDDEEEDESD.

The protein belongs to the HMGB family.

It is found in the nucleus. Its subcellular location is the chromosome. Found in condensed chromomeres. Binds preferentially to AT-rich DNA. This is Mobility group protein 1A (HMG1A) from Chironomus tentans (Midge).